A 361-amino-acid polypeptide reads, in one-letter code: tRNA pseudouridine synthase D (361 aa).

Aspartate 76 (nucleophile) is an active-site residue. The region spanning 151-318 (GIPNYFGYQR…EQGSRRLAWI (168 aa)) is the TRUD domain.

This sequence belongs to the pseudouridine synthase TruD family.

The enzyme catalyses uridine(13) in tRNA = pseudouridine(13) in tRNA. Functionally, responsible for synthesis of pseudouridine from uracil-13 in transfer RNAs. This chain is tRNA pseudouridine synthase D, found in Wolinella succinogenes (strain ATCC 29543 / DSM 1740 / CCUG 13145 / JCM 31913 / LMG 7466 / NCTC 11488 / FDC 602W) (Vibrio succinogenes).